The sequence spans 125 residues: Phosphoribosyl-AMP cyclohydrolase (125 aa).

Asp74 serves as a coordination point for Mg(2+). Position 75 (Cys75) interacts with Zn(2+). Residues Asp76 and Asp78 each contribute to the Mg(2+) site. Positions 92 and 99 each coordinate Zn(2+).

This sequence belongs to the PRA-CH family. Homodimer. The cofactor is Mg(2+). It depends on Zn(2+) as a cofactor.

It is found in the cytoplasm. It carries out the reaction 1-(5-phospho-beta-D-ribosyl)-5'-AMP + H2O = 1-(5-phospho-beta-D-ribosyl)-5-[(5-phospho-beta-D-ribosylamino)methylideneamino]imidazole-4-carboxamide. The protein operates within amino-acid biosynthesis; L-histidine biosynthesis; L-histidine from 5-phospho-alpha-D-ribose 1-diphosphate: step 3/9. Functionally, catalyzes the hydrolysis of the adenine ring of phosphoribosyl-AMP. This chain is Phosphoribosyl-AMP cyclohydrolase, found in Geobacter sulfurreducens (strain ATCC 51573 / DSM 12127 / PCA).